The following is a 1019-amino-acid chain: UPF0182 protein Krad_1193 (1019 aa).

Helical transmembrane passes span 19–39 (GAALPTVVILVAVVIAVVVGA), 61–81 (LWLQVLLFTLGALLLAAAVAV), 115–135 (RLVVVVLSAAAGLFGGSVAMS), 169–189 (WLAFLVSFLTAAVVLAGIAGL), 213–233 (VHLASLAAAFLLLRAAGYWLD), 264–284 (AILALIAVVVALLFVAAAVGT), and 291–311 (IGTGLLVVSAIAIGGIYPWAV). Disordered regions lie at residues 897–934 (GNSGAGAGDEGAPPPTAGTPAPTDGATGGPAPDPATGD) and 977–1019 (DAAS…TPTP). The segment covering 977–1005 (DAASAAEARLERSGTSGPTSSSSPSASSA) has biased composition (low complexity). The segment covering 1006–1019 (PPVPGETPAATPTP) has biased composition (pro residues).

The protein belongs to the UPF0182 family.

The protein localises to the cell membrane. The protein is UPF0182 protein Krad_1193 of Kineococcus radiotolerans (strain ATCC BAA-149 / DSM 14245 / SRS30216).